Here is a 599-residue protein sequence, read N- to C-terminus: Elongation factor 4 (599 aa).

The region spanning 2-184 (KNIRNFSIIA…RLVRDIPPPE (183 aa)) is the tr-type G domain. GTP is bound by residues 14 to 19 (DHGKST) and 131 to 134 (NKID).

Belongs to the TRAFAC class translation factor GTPase superfamily. Classic translation factor GTPase family. LepA subfamily.

The protein resides in the cell inner membrane. It carries out the reaction GTP + H2O = GDP + phosphate + H(+). In terms of biological role, required for accurate and efficient protein synthesis under certain stress conditions. May act as a fidelity factor of the translation reaction, by catalyzing a one-codon backward translocation of tRNAs on improperly translocated ribosomes. Back-translocation proceeds from a post-translocation (POST) complex to a pre-translocation (PRE) complex, thus giving elongation factor G a second chance to translocate the tRNAs correctly. Binds to ribosomes in a GTP-dependent manner. The chain is Elongation factor 4 from Sodalis glossinidius (strain morsitans).